The chain runs to 424 residues: Histidine--tRNA ligase (424 aa).

The protein belongs to the class-II aminoacyl-tRNA synthetase family. As to quaternary structure, homodimer.

The protein resides in the cytoplasm. It catalyses the reaction tRNA(His) + L-histidine + ATP = L-histidyl-tRNA(His) + AMP + diphosphate + H(+). The protein is Histidine--tRNA ligase of Salmonella typhi.